The primary structure comprises 161 residues: Ribosome maturation factor RimP (161 aa).

This sequence belongs to the RimP family.

The protein localises to the cytoplasm. Its function is as follows. Required for maturation of 30S ribosomal subunits. This is Ribosome maturation factor RimP from Rickettsia rickettsii (strain Iowa).